A 746-amino-acid chain; its full sequence is Stromal interaction molecule 2 (746 aa).

Residues 1-14 form the signal peptide; it reads MLVLGLLVAGAADG. Over 15–218 the chain is Extracellular; it reads CELVPRHLRG…RPPHNWMKDF (204 aa). One can recognise an EF-hand domain in the interval 67–102; that stretch reads FSLEALQTIHKQMDDDKDGGIEVEESDEFIREDMKY. Residues Asp80, Asp82, Asp84, and Glu91 each contribute to the Ca(2+) site. Asn135 carries N-linked (GlcNAc...) asparagine glycosylation. An SAM domain is found at 136–204; sequence WTLEDTLQWL…QLKALDVVLF (69 aa). The chain crosses the membrane as a helical span at residues 219–235; sequence ILTVSIVIGVGGCWFAY. The Cytoplasmic segment spans residues 236-746; that stretch reads TQNKTSKEHV…IKSLFKKKSK (511 aa). Positions 247–394 form a coiled coil; it reads KMMKDLESLQ…EKIKKKRSTV (148 aa). The interval 483–562 is disordered; sequence DLDEDTPPIV…SLPSPDPDIL (80 aa). The residue at position 523 (Ser523) is a Phosphoserine. The segment covering 537–549 has biased composition (basic residues); it reads HPSHPRHPHHPQH. 8 positions are modified to phosphoserine: Ser609, Ser621, Ser640, Ser650, Ser661, Ser665, Ser680, and Ser697. The segment at 685–746 is disordered; sequence SSGIPVPKPR…IKSLFKKKSK (62 aa). A compositionally biased stretch (basic and acidic residues) spans 723 to 732; the sequence is DLCHNGEKSK. The span at 733-746 shows a compositional bias: basic residues; sequence KPSKIKSLFKKKSK.

In terms of assembly, oligomer with STIM1. Interacts with ORAI1. Post-translationally, glycosylated. In terms of processing, phosphorylated predominantly on Ser residues. In terms of tissue distribution, expressed in all tissues and tumor cell lines examined.

It is found in the endoplasmic reticulum membrane. Its function is as follows. Plays a role in mediating store-operated Ca(2+) entry (SOCE), a Ca(2+) influx following depletion of intracellular Ca(2+) stores. Functions as a highly sensitive Ca(2+) sensor in the endoplasmic reticulum which activates both store-operated and store-independent Ca(2+)-influx. Regulates basal cytosolic and endoplasmic reticulum Ca(2+) concentrations. Upon mild variations of the endoplasmic reticulum Ca(2+) concentration, translocates from the endoplasmic reticulum to the plasma membrane where it probably activates the Ca(2+) release-activated Ca(2+) (CRAC) channels ORAI1, ORAI2 and ORAI3. May inhibit STIM1-mediated Ca(2+) influx. The protein is Stromal interaction molecule 2 (STIM2) of Homo sapiens (Human).